The primary structure comprises 281 residues: Ribosomal protein L11 methyltransferase (281 aa).

4 residues coordinate S-adenosyl-L-methionine: Thr133, Gly154, Asp175, and Asn216.

The protein belongs to the methyltransferase superfamily. PrmA family.

It localises to the cytoplasm. The catalysed reaction is L-lysyl-[protein] + 3 S-adenosyl-L-methionine = N(6),N(6),N(6)-trimethyl-L-lysyl-[protein] + 3 S-adenosyl-L-homocysteine + 3 H(+). Methylates ribosomal protein L11. The polypeptide is Ribosomal protein L11 methyltransferase (Campylobacter jejuni subsp. jejuni serotype O:6 (strain 81116 / NCTC 11828)).